Here is a 364-residue protein sequence, read N- to C-terminus: Alanine racemase (364 aa).

Residue K35 is the Proton acceptor; specific for D-alanine of the active site. K35 bears the N6-(pyridoxal phosphate)lysine mark. A substrate-binding site is contributed by R136. Y261 (proton acceptor; specific for L-alanine) is an active-site residue. Position 309 (M309) interacts with substrate.

This sequence belongs to the alanine racemase family. Pyridoxal 5'-phosphate is required as a cofactor.

It carries out the reaction L-alanine = D-alanine. Its pathway is amino-acid biosynthesis; D-alanine biosynthesis; D-alanine from L-alanine: step 1/1. In terms of biological role, catalyzes the interconversion of L-alanine and D-alanine. May also act on other amino acids. This is Alanine racemase (alr) from Shewanella amazonensis (strain ATCC BAA-1098 / SB2B).